The chain runs to 115 residues: Ig kappa chain V region 3315 (115 aa).

Residues Ala1–Cys24 form a framework-1 region. Residues Gln25 to Ser37 are complementarity-determining-1. The framework-2 stretch occupies residues Trp38–Tyr52. Residues Arg53–Ser59 form a complementarity-determining-2 region. The segment at Gly60–Cys91 is framework-3. Positions Leu92–Thr104 are complementarity-determining-3. The segment at Phe105–Lys114 is framework-4.

In Oryctolagus cuniculus (Rabbit), this protein is Ig kappa chain V region 3315.